Reading from the N-terminus, the 414-residue chain is 2,3-diketo-5-methylthiopentyl-1-phosphate enolase (414 aa).

Lys-99 acts as the Proton acceptor in catalysis. Residues Lys-148, 174 to 177, His-265, Gly-338, and 360 to 361 contribute to the substrate site; these read KDDE and GG. Mg(2+) is bound by residues Lys-174, Asp-176, and Glu-177. Lys-174 bears the N6-carboxylysine mark.

It belongs to the RuBisCO large chain family. Type IV subfamily. Homodimer. Mg(2+) is required as a cofactor.

The catalysed reaction is 5-methylsulfanyl-2,3-dioxopentyl phosphate = 2-hydroxy-5-methylsulfanyl-3-oxopent-1-enyl phosphate. It functions in the pathway amino-acid biosynthesis; L-methionine biosynthesis via salvage pathway; L-methionine from S-methyl-5-thio-alpha-D-ribose 1-phosphate: step 3/6. Its function is as follows. Catalyzes the enolization of 2,3-diketo-5-methylthiopentyl-1-phosphate (DK-MTP-1-P) into 2-hydroxy-3-keto-5-methylthiopentenyl-1-phosphate (HK-MTPenyl-1-P). The chain is 2,3-diketo-5-methylthiopentyl-1-phosphate enolase from Bacillus thuringiensis (strain Al Hakam).